The following is a 906-amino-acid chain: DNA gyrase subunit A (906 aa).

The region spanning 35 to 524 is the Topo IIA-type catalytic domain; sequence IPDVRDGLKP…GEFDQDIEDL (490 aa). Tyr-123 acts as the O-(5'-phospho-DNA)-tyrosine intermediate in catalysis. The GyrA-box motif lies at 551–557; sequence QKRGGKG. Residues 886-906 form a disordered region; it reads SESEEDSELEEDLEQAEEVYT.

Belongs to the type II topoisomerase GyrA/ParC subunit family. Heterotetramer, composed of two GyrA and two GyrB chains. In the heterotetramer, GyrA contains the active site tyrosine that forms a transient covalent intermediate with DNA, while GyrB binds cofactors and catalyzes ATP hydrolysis.

The protein localises to the cytoplasm. The enzyme catalyses ATP-dependent breakage, passage and rejoining of double-stranded DNA.. Its function is as follows. A type II topoisomerase that negatively supercoils closed circular double-stranded (ds) DNA in an ATP-dependent manner to modulate DNA topology and maintain chromosomes in an underwound state. Negative supercoiling favors strand separation, and DNA replication, transcription, recombination and repair, all of which involve strand separation. Also able to catalyze the interconversion of other topological isomers of dsDNA rings, including catenanes and knotted rings. Type II topoisomerases break and join 2 DNA strands simultaneously in an ATP-dependent manner. The chain is DNA gyrase subunit A from Rickettsia felis (strain ATCC VR-1525 / URRWXCal2) (Rickettsia azadi).